A 231-amino-acid polypeptide reads, in one-letter code: tRNA (guanine-N(7)-)-methyltransferase (231 aa).

S-adenosyl-L-methionine contacts are provided by D57, E82, D109, and D132. D132 is a catalytic residue. Substrate contacts are provided by residues K136, D168, and 205–208; that span reads TKFE. A disordered region spans residues 194 to 214; sequence AFVPPPPPRPQTKFERRGLRK.

This sequence belongs to the class I-like SAM-binding methyltransferase superfamily. TrmB family.

It carries out the reaction guanosine(46) in tRNA + S-adenosyl-L-methionine = N(7)-methylguanosine(46) in tRNA + S-adenosyl-L-homocysteine. It functions in the pathway tRNA modification; N(7)-methylguanine-tRNA biosynthesis. Functionally, catalyzes the formation of N(7)-methylguanine at position 46 (m7G46) in tRNA. This chain is tRNA (guanine-N(7)-)-methyltransferase, found in Halorhodospira halophila (strain DSM 244 / SL1) (Ectothiorhodospira halophila (strain DSM 244 / SL1)).